The chain runs to 222 residues: Ribonuclease T (222 aa).

The region spanning 20–194 (VVIDVETAGF…YDTERTAELF (175 aa)) is the Exonuclease domain. Positions 23, 25, 181, and 186 each coordinate Mg(2+). The active-site Proton donor/acceptor is H181.

This sequence belongs to the RNase T family. As to quaternary structure, homodimer. Mg(2+) serves as cofactor.

Its function is as follows. Trims short 3' overhangs of a variety of RNA species, leaving a one or two nucleotide 3' overhang. Responsible for the end-turnover of tRNA: specifically removes the terminal AMP residue from uncharged tRNA (tRNA-C-C-A). Also appears to be involved in tRNA biosynthesis. This is Ribonuclease T from Shewanella sp. (strain ANA-3).